The sequence spans 334 residues: Formamidase (334 aa).

Residues 14–260 enclose the CN hydrolase domain; sequence FLVAAIQFPV…WEIVTGEIYP (247 aa). Catalysis depends on E60, which acts as the Proton acceptor. The active-site Proton donor is K133. Catalysis depends on C166, which acts as the Nucleophile.

It belongs to the carbon-nitrogen hydrolase superfamily. Aliphatic amidase family.

The enzyme catalyses formamide + H2O = formate + NH4(+). Functionally, is an aliphatic amidase with a restricted substrate specificity, as it only hydrolyzes formamide. The sequence is that of Formamidase from Helicobacter pylori (strain HPAG1).